Consider the following 348-residue polypeptide: Rhodopsin (348 aa).

M1 is subject to N-acetylmethionine. Residues 1-36 are Extracellular-facing; sequence MNGTEGPNFYVPFSNATGVVRSPFEYPQYYLAEPWQ. N-linked (GlcNAc...) asparagine glycosylation is found at N2 and N15. A helical transmembrane segment spans residues 37–61; the sequence is FSMLAAYMFLLIVLGFPINFLTLYV. The Cytoplasmic portion of the chain corresponds to 62–73; sequence TVQHKKLRTPLN. Residues 74-96 traverse the membrane as a helical segment; sequence YILLNLAVADLFMVFGGFTTTLY. Residues 97–110 lie on the Extracellular side of the membrane; the sequence is TSLHGYFVFGPTGC. The cysteines at positions 110 and 187 are disulfide-linked. Residues 111–133 form a helical membrane-spanning segment; that stretch reads NLEGFFATLGGEIALWSLVVLAI. The 'Ionic lock' involved in activated form stabilization motif lies at 134–136; it reads ERY. At 134 to 152 the chain is on the cytoplasmic side; sequence ERYVVICKPMSNFRFGENH. A helical membrane pass occupies residues 153–173; sequence AIMGVVFTWIMALACAAPPLV. Residues 174 to 202 are Extracellular-facing; the sequence is GWSRYIPEGMQCSCGVDYYTLKPEVNNES. E201 is a binding site for Zn(2+). A helical membrane pass occupies residues 203-224; sequence FVIYMFVVHFTIPLIVIFFCYG. The Cytoplasmic segment spans residues 225–252; that stretch reads QLVFTVKEAAAQQQESATTQKAEKEVTR. Residues 253 to 274 traverse the membrane as a helical segment; the sequence is MVILMVVFFLICWFPYAGVAFY. At 275-286 the chain is on the extracellular side; sequence IFTHQGSNFGPI. Q279 is a binding site for Zn(2+). The helical transmembrane segment at 287 to 308 threads the bilayer; the sequence is FMTLPAFFAKSSSIYNPVIYIM. K296 carries the N6-(retinylidene)lysine modification. The Cytoplasmic portion of the chain corresponds to 309–348; it reads MNKQFRNCMLTTLCCGKNILGDDEASATASKTETSQVAPA. S-palmitoyl cysteine attachment occurs at residues C322 and C323. Positions 330-348 are interaction with SAG; that stretch reads DDEASATASKTETSQVAPA. A Phosphoserine modification is found at S334. A Phosphothreonine modification is found at T336. S338 is subject to Phosphoserine. Residues T340 and T342 each carry the phosphothreonine modification. S343 carries the phosphoserine modification.

The protein belongs to the G-protein coupled receptor 1 family. Opsin subfamily. Homodimer. May form a complex composed of RHO, GRK1 and RCVRN in a Ca(2+)-dependent manner; RCVRN prevents the interaction between GRK1 and RHO. Interacts with GRK1. Interacts (phosphorylated form) with SAG. Interacts with GNAT1. Interacts with GNAT3. SAG and G-proteins compete for a common binding site. Interacts with PRCD; the interaction promotes PRCD stability. Forms a complex with ASAP1 and ARF4. Forms a complex with ASAP1, RAB11A, Rabin8/RAB3IP, ARF4 and RAB11FIP3; the complex regulates Golgi-to-cilia rhodopsin/RHO transport in photoreceptors. Phosphorylated on some or all of the serine and threonine residues present in the C-terminal region. Post-translationally, contains one covalently linked retinal chromophore. Upon light absorption, the covalently bound 11-cis-retinal is converted to all-trans-retinal. After hydrolysis of the Schiff base and release of the covalently bound all-trans-retinal, active rhodopsin is regenerated by binding of a fresh molecule of 11-cis-retinal.

Its subcellular location is the membrane. The protein localises to the cell projection. The protein resides in the cilium. It is found in the photoreceptor outer segment. Its function is as follows. Photoreceptor required for image-forming vision at low light intensity. Required for photoreceptor cell viability after birth. Light-induced isomerization of 11-cis to all-trans retinal triggers a conformational change that activates signaling via G-proteins. Subsequent receptor phosphorylation mediates displacement of the bound G-protein alpha subunit by the arrestin SAG and terminates signaling. This is Rhodopsin (RHO) from Cricetulus griseus (Chinese hamster).